Here is a 108-residue protein sequence, read N- to C-terminus: Peptidyl-prolyl cis-trans isomerase FKBP1A (108 aa).

The region spanning 20 to 108 (GQTCVVHYTG…VFDVELLKLE (89 aa)) is the PPIase FKBP-type domain. Position 53 is an N6-acetyllysine; alternate (K53). K53 is subject to N6-succinyllysine; alternate.

Belongs to the FKBP-type PPIase family. FKBP1 subfamily. Interacts with TGFBR1; prevents TGFBR1 phosphorylation by TGFBR2 and stabilizes it in the inactive conformation. Interacts with ACVR1B and SMAD7. Identified in a complex composed of RYR1, PDE4D, PKA, FKBP1A and protein phosphatase 1 (PP1). Interacts directly with RYR2 and RYR3. Interacts directly with RYR1. Interacts with GLMN; rapamycin and FK506 abolish the interaction with GLMN in a dose dependent manner.

The protein localises to the cytoplasm. It is found in the cytosol. It localises to the sarcoplasmic reticulum membrane. The catalysed reaction is [protein]-peptidylproline (omega=180) = [protein]-peptidylproline (omega=0). Its activity is regulated as follows. Inhibited by both FK506 and rapamycin. In terms of biological role, keeps in an inactive conformation TGFBR1, the TGF-beta type I serine/threonine kinase receptor, preventing TGF-beta receptor activation in absence of ligand. Recruits SMAD7 to ACVR1B which prevents the association of SMAD2 and SMAD3 with the activin receptor complex, thereby blocking the activin signal. May modulate the RYR1 calcium channel activity. PPIases accelerate the folding of proteins. It catalyzes the cis-trans isomerization of proline imidic peptide bonds in oligopeptides. This chain is Peptidyl-prolyl cis-trans isomerase FKBP1A (Fkbp1a), found in Mus musculus (Mouse).